Here is a 185-residue protein sequence, read N- to C-terminus: Elongation factor P (185 aa).

This sequence belongs to the elongation factor P family.

The protein resides in the cytoplasm. It functions in the pathway protein biosynthesis; polypeptide chain elongation. Functionally, involved in peptide bond synthesis. Stimulates efficient translation and peptide-bond synthesis on native or reconstituted 70S ribosomes in vitro. Probably functions indirectly by altering the affinity of the ribosome for aminoacyl-tRNA, thus increasing their reactivity as acceptors for peptidyl transferase. This is Elongation factor P from Clostridium tetani (strain Massachusetts / E88).